The sequence spans 256 residues: Type III pantothenate kinase (256 aa).

6–13 (DCGNTNTV) is an ATP binding site. 107–110 (GPDR) serves as a coordination point for substrate. The active-site Proton acceptor is the Asp109. Asp129 contacts K(+). Thr132 contacts ATP. Thr184 is a substrate binding site.

Belongs to the type III pantothenate kinase family. As to quaternary structure, homodimer. It depends on NH4(+) as a cofactor. K(+) is required as a cofactor.

It is found in the cytoplasm. It catalyses the reaction (R)-pantothenate + ATP = (R)-4'-phosphopantothenate + ADP + H(+). It participates in cofactor biosynthesis; coenzyme A biosynthesis; CoA from (R)-pantothenate: step 1/5. Functionally, catalyzes the phosphorylation of pantothenate (Pan), the first step in CoA biosynthesis. The protein is Type III pantothenate kinase of Dinoroseobacter shibae (strain DSM 16493 / NCIMB 14021 / DFL 12).